The sequence spans 1214 residues: MGKKDKNKKGGQDSAAAPQPQQQQKQQQQRQQQPQQLQQPQQLQQPQQLQQPQQQQQQQPHQQQQQSSRQQPSTSSGGSRASGFQQGGQQQKSQDAEGWTAQKKQGKQQVQGWTKQGQQGGHQQGRQGQDGGYQQRPPGQQQGGHQQGRQGQEGGYQQRPPGQQQGGHQQGRQGQEGGYQQRPSGQQQGGHQQGRQGQEGGYQQRPPGQQQGGHQQGRQGQEGGYQQRPSGQQQGGHQQGRQGQEGGYQQRPPGQQQGGHQQGRQGQEGGYQQRPPGQQQGGHEQGRQGQEGGYQQRPSGQQQGGHQQGRQGQEGGYQQRPSGQQQGGHQQGRQGQEGGYQQRPSGQQQGGHQQGRQGQEGGYQQRPPGQQPNQTQSQGQYQSRGPPQQQQAAPLPLPPQPAGSIKRGTIGKPGQVGINYLDLDLSKMPSVAYHYDVKIMPERPKKFYRQAFEQFRVDQLGGAVLAYDGKASCYSVDKLPLNSQNPEVTVTDRNGRTLRYTIEIKETGDSTIDLKSLTTYMNDRIFDKPMRAMQCVEVVLASPCHNKAIRVGRSFFKMSDPNNRHELDDGYEALVGLYQAFMLGDRPFLNVDISHKSFPISMPMIEYLERFSLKAKINNTTNLDYSRRFLEPFLRGINVVYTPPQSFQSAPRVYRVNGLSRAPASSETFEHDGKKVTIASYFHSRNYPLKFPQLHCLNVGSSIKSILLPIELCSIEEGQALNRKDGATQVANMIKYAATSTNVRKRKIMNLLQYFQHNLDPTISRFGIRIANDFIVVSTRVLSPPQVEYHSKRFTMVKNGSWRMDGMKFLEPKPKAHKCAVLYCDPRSGRKMNYTQLNDFGNLIISQGKAVNISLDSDVTYRPFTDDERSLDTIFADLKRSQHDLAIVIIPQFRISYDTIKQKAELQHGILTQCIKQFTVERKCNNQTIGNILLKINSKLNGINHKIKDDPRLPMMKNTMYIGADVTHPSPDQREIPSVVGVAASHDPYGASYNMQYRLQRGALEEIEDMFSITLEHLRVYKEYRNAYPDHIIYYRDGVSDGQFPKIKNEELRCIKQACDKVGCKPKICCVIVVKRHHTRFFPSGDVTTSNKFNNVDPGTVVDRTIVHPNEMQFFMVSHQAIQGTAKPTRYNVIENTGNLDIDLLQQLTYNLCHMFPRCNRSVSYPAPAYLAHLVAARGRVYLTGTNRFLDLKKEYAKRTIVPEFMKKNPMYFV.

The tract at residues 1–412 is disordered; it reads MGKKDKNKKG…GSIKRGTIGK (412 aa). Low complexity-rich tracts occupy residues 18–93 and 107–117; these read PQPQ…QQKS and KQQVQGWTKQG. Gly residues-rich tracts occupy residues 118–131, 141–154, 164–177, 187–200, 210–223, 233–246, and 256–269; these read QQGGHQQGRQGQDG and QQGGHQQGRQGQEG. The segment covering 270–282 has biased composition (low complexity); that stretch reads GYQQRPPGQQQGG. Gly residues-rich tracts occupy residues 302 to 315, 325 to 338, and 348 to 361; these read QQGGHQQGRQGQEG. The segment covering 362–394 has biased composition (low complexity); it reads GYQQRPPGQQPNQTQSQGQYQSRGPPQQQQAAP. In terms of domain architecture, PAZ spans 608 to 717; it reads LERFSLKAKI…LPIELCSIEE (110 aa). The tract at residues 681 to 686 is interaction with guide RNA; the sequence is YFHSRN. The Piwi domain maps to 885–1186; sequence LAIVIIPQFR…ARGRVYLTGT (302 aa). 2 residues coordinate a divalent metal cation: aspartate 965 and aspartate 1037. Interaction with guide RNA regions lie at residues 1075–1076, 1119–1127, and 1156–1178; these read KR, HQAIQGTAK, and FPRCNRSVSYPAPAYLAHLVAAR. Histidine 1173 lines the a divalent metal cation pocket.

This sequence belongs to the argonaute family. Ago subfamily. In terms of assembly, interacts with Fmr1, Dcr-1 and vig to form the RNA-induced silencing complex (RISC), a ribonucleoprotein (RNP) complex involved in translation regulation, other components of the complex are RpL5, RpL11 and Rm62. As part of the RISC complex, interacts with Tudor-SN. Interacts with Taf11. As to quaternary structure, (Microbial infection) Interacts with cricket paralysis virus protein 1A; this interaction may block the RISC activity. Mg(2+) is required as a cofactor. Mn(2+) serves as cofactor.

It is found in the nucleus. Its subcellular location is the cytoplasm. It localises to the cytoplasmic ribonucleoprotein granule. Its function is as follows. Essential for RNA interference (RNAi); double-stranded RNA induces potent and specific gene silencing. RNAi is mediated by the RNA-induced silencing complex (RISC), a sequence-specific, multicomponent nuclease that destroys or silences messenger RNAs homologous to the silencing trigger. The sequence is that of Protein argonaute-2 from Drosophila melanogaster (Fruit fly).